The chain runs to 548 residues: Poly(ADP-ribose) glycohydrolase 1 (548 aa).

It belongs to the poly(ADP-ribose) glycohydrolase family.

It catalyses the reaction [(1''-&gt;2')-ADP-alpha-D-ribose](n) + H2O = [(1''-&gt;2')-ADP-alpha-D-ribose](n-1) + ADP-D-ribose. Poly(ADP-ribose) synthesized after DNA damage is only present transiently and is rapidly degraded by poly(ADP-ribose) glycohydrolase. Involved in establishing period length of the circadian oscillator. May regulate post-translational poly(ADP-ribosyl)ation of an oscillator component. The sequence is that of Poly(ADP-ribose) glycohydrolase 1 (PARG1) from Arabidopsis thaliana (Mouse-ear cress).